Here is a 617-residue protein sequence, read N- to C-terminus: ATP-dependent rRNA helicase SPB4 (617 aa).

The Q motif motif lies at 7 to 35 (WADLDYELQPWIKKAINVSGFDSMTPVQA). Residues 38 to 224 (IPMFAKNKDV…KTGLRNPVKI (187 aa)) enclose the Helicase ATP-binding domain. ATP is bound at residue 51–58 (SVTGSGKT). The short motif at 172–175 (DEAD) is the DEAD box element. The Helicase C-terminal domain maps to 252-406 (NLIHIMNNIR…ETDINKNKIS (155 aa)).

This sequence belongs to the DEAD box helicase family. DDX55/SPB4 subfamily. As to quaternary structure, component of pre-60S ribosomal complexes.

The protein localises to the nucleus. Its subcellular location is the nucleolus. The catalysed reaction is ATP + H2O = ADP + phosphate + H(+). In terms of biological role, ATP-binding RNA helicase involved in the biogenesis of 60S ribosomal subunits. Binds 90S pre-ribosomal particles and dissociates from pre-60S ribosomal particles after processing of 27SB pre-rRNA. Required for the normal formation of 18S rRNA through the processing of pre-rRNAs at sites A0, A1 and A2, and the normal formation of 25S and 5.8S rRNAs through the processing of pre-rRNAs at sites C1 and C2. The protein is ATP-dependent rRNA helicase SPB4 of Candida glabrata (strain ATCC 2001 / BCRC 20586 / JCM 3761 / NBRC 0622 / NRRL Y-65 / CBS 138) (Yeast).